We begin with the raw amino-acid sequence, 560 residues long: DNA ligase B (560 aa).

Catalysis depends on K124, which acts as the N6-AMP-lysine intermediate.

Belongs to the NAD-dependent DNA ligase family. LigB subfamily.

The catalysed reaction is NAD(+) + (deoxyribonucleotide)n-3'-hydroxyl + 5'-phospho-(deoxyribonucleotide)m = (deoxyribonucleotide)n+m + AMP + beta-nicotinamide D-nucleotide.. Its function is as follows. Catalyzes the formation of phosphodiester linkages between 5'-phosphoryl and 3'-hydroxyl groups in double-stranded DNA using NAD as a coenzyme and as the energy source for the reaction. This Shigella flexneri serotype 5b (strain 8401) protein is DNA ligase B.